The sequence spans 281 residues: DegV domain-containing protein DR_1986 (281 aa).

Residues 3–278 (IAIVTDSTSD…PGAVGVALEP (276 aa)) form the DegV domain. Residues Thr-61 and Ser-93 each contribute to the hexadecanoate site.

In terms of biological role, may bind long-chain fatty acids, such as palmitate, and may play a role in lipid transport or fatty acid metabolism. The protein is DegV domain-containing protein DR_1986 of Deinococcus radiodurans (strain ATCC 13939 / DSM 20539 / JCM 16871 / CCUG 27074 / LMG 4051 / NBRC 15346 / NCIMB 9279 / VKM B-1422 / R1).